Here is an 88-residue protein sequence, read N- to C-terminus: Large ribosomal subunit protein bL27 (88 aa).

The disordered stretch occupies residues 1-26 (MAHKKGASSSSNGRDSEAKRLGVKRF).

It belongs to the bacterial ribosomal protein bL27 family.

The chain is Large ribosomal subunit protein bL27 from Corynebacterium glutamicum (strain R).